The sequence spans 56 residues: Large ribosomal subunit protein bL33 (56 aa).

Belongs to the bacterial ribosomal protein bL33 family.

The protein is Large ribosomal subunit protein bL33 of Helicobacter hepaticus (strain ATCC 51449 / 3B1).